We begin with the raw amino-acid sequence, 230 residues long: tRNA (guanine-N(7)-)-methyltransferase (230 aa).

Residues Glu61, Glu86, Asp113, and Asp135 each coordinate S-adenosyl-L-methionine. Residue Asp135 is part of the active site. Residues Lys139, Asp171, and 209 to 212 (TRYE) each bind substrate.

This sequence belongs to the class I-like SAM-binding methyltransferase superfamily. TrmB family.

The enzyme catalyses guanosine(46) in tRNA + S-adenosyl-L-methionine = N(7)-methylguanosine(46) in tRNA + S-adenosyl-L-homocysteine. Its pathway is tRNA modification; N(7)-methylguanine-tRNA biosynthesis. Functionally, catalyzes the formation of N(7)-methylguanine at position 46 (m7G46) in tRNA. This chain is tRNA (guanine-N(7)-)-methyltransferase, found in Rhizobium etli (strain ATCC 51251 / DSM 11541 / JCM 21823 / NBRC 15573 / CFN 42).